The following is a 59-amino-acid chain: Small, acid-soluble spore protein H (59 aa).

Belongs to the SspH family.

It is found in the spore core. The protein is Small, acid-soluble spore protein H of Bacillus cereus (strain ZK / E33L).